Consider the following 131-residue polypeptide: Small ribosomal subunit protein uS8 (131 aa).

The protein belongs to the universal ribosomal protein uS8 family. Part of the 30S ribosomal subunit. Contacts proteins S5 and S12.

One of the primary rRNA binding proteins, it binds directly to 16S rRNA central domain where it helps coordinate assembly of the platform of the 30S subunit. This is Small ribosomal subunit protein uS8 from Wolbachia pipientis wMel.